Consider the following 150-residue polypeptide: Ribosome-binding factor A (150 aa).

The disordered stretch occupies residues 126-150 (EVARDLSHDDDEDGGADEAPRNGDE).

The protein belongs to the RbfA family. Monomer. Binds 30S ribosomal subunits, but not 50S ribosomal subunits or 70S ribosomes.

The protein resides in the cytoplasm. Its function is as follows. One of several proteins that assist in the late maturation steps of the functional core of the 30S ribosomal subunit. Associates with free 30S ribosomal subunits (but not with 30S subunits that are part of 70S ribosomes or polysomes). Required for efficient processing of 16S rRNA. May interact with the 5'-terminal helix region of 16S rRNA. The protein is Ribosome-binding factor A of Brucella suis (strain ATCC 23445 / NCTC 10510).